The sequence spans 164 residues: Interferon gamma (164 aa).

Residues 1 to 19 (MTCQTYNLFVLSVIMIYYG) form the signal peptide. 2 N-linked (GlcNAc...) asparagine glycosylation sites follow: N42 and N61.

This sequence belongs to the type II (or gamma) interferon family. As to quaternary structure, homodimer.

Its subcellular location is the secreted. Functionally, produced by lymphocytes activated by specific antigens or mitogens. IFN-gamma, in addition to having antiviral activity, has important immunoregulatory functions. It is a potent activator of macrophages, it has antiproliferative effects on transformed cells and it can potentiate the antiviral and antitumor effects of the type I interferons. This Gallus gallus (Chicken) protein is Interferon gamma (IFNG).